We begin with the raw amino-acid sequence, 138 residues long: uncharacterized protein (138 aa).

A MsrB domain is found at 9 to 133 (EDEWKKELGP…NSASLEFHNE (125 aa)). Zn(2+) is bound by residues cysteine 49, cysteine 52, cysteine 97, and cysteine 100. Residue cysteine 122 is the Nucleophile of the active site.

The protein belongs to the MsrB Met sulfoxide reductase family. Requires Zn(2+) as cofactor.

It is found in the cytoplasm. The protein localises to the nucleus. This is an uncharacterized protein from Schizosaccharomyces pombe (strain 972 / ATCC 24843) (Fission yeast).